Reading from the N-terminus, the 240-residue chain is Gene 88 protein (240 aa).

This is Gene 88 protein (88) from Mycobacterium phage D29 (Mycobacteriophage D29).